Reading from the N-terminus, the 111-residue chain is Cytochrome b-c1 complex subunit 7 (111 aa).

Position 2 is an N-acetylalanine (Ala2). Lys19 is subject to N6-acetyllysine. Residue Lys78 is modified to N6-acetyllysine; alternate. The residue at position 78 (Lys78) is an N6-succinyllysine; alternate. The residue at position 83 (Lys83) is an N6-acetyllysine. N6-acetyllysine; alternate is present on Lys88. An N6-succinyllysine; alternate modification is found at Lys88. Lys96 is modified (N6-acetyllysine).

Belongs to the UQCRB/QCR7 family. Component of the ubiquinol-cytochrome c oxidoreductase (cytochrome b-c1 complex, complex III, CIII), a multisubunit enzyme composed of 11 subunits. The complex is composed of 3 respiratory subunits cytochrome b, cytochrome c1 and Rieske protein UQCRFS1, 2 core protein subunits UQCRC1/QCR1 and UQCRC2/QCR2, and 6 low-molecular weight protein subunits UQCRH/QCR6, UQCRB/QCR7, UQCRQ/QCR8, UQCR10/QCR9, UQCR11/QCR10 and subunit 9, the cleavage product of Rieske protein UQCRFS1. The complex exists as an obligatory dimer and forms supercomplexes (SCs) in the inner mitochondrial membrane with NADH-ubiquinone oxidoreductase (complex I, CI) and cytochrome c oxidase (complex IV, CIV), resulting in different assemblies (supercomplex SCI(1)III(2)IV(1) and megacomplex MCI(2)III(2)IV(2)).

It is found in the mitochondrion inner membrane. In terms of biological role, component of the ubiquinol-cytochrome c oxidoreductase, a multisubunit transmembrane complex that is part of the mitochondrial electron transport chain which drives oxidative phosphorylation. The respiratory chain contains 3 multisubunit complexes succinate dehydrogenase (complex II, CII), ubiquinol-cytochrome c oxidoreductase (cytochrome b-c1 complex, complex III, CIII) and cytochrome c oxidase (complex IV, CIV), that cooperate to transfer electrons derived from NADH and succinate to molecular oxygen, creating an electrochemical gradient over the inner membrane that drives transmembrane transport and the ATP synthase. The cytochrome b-c1 complex catalyzes electron transfer from ubiquinol to cytochrome c, linking this redox reaction to translocation of protons across the mitochondrial inner membrane, with protons being carried across the membrane as hydrogens on the quinol. In the process called Q cycle, 2 protons are consumed from the matrix, 4 protons are released into the intermembrane space and 2 electrons are passed to cytochrome c. In Bos taurus (Bovine), this protein is Cytochrome b-c1 complex subunit 7 (UQCRB).